Here is a 447-residue protein sequence, read N- to C-terminus: N-succinylarginine dihydrolase (447 aa).

Residues 19 to 28, Asn-110, and 137 to 138 contribute to the substrate site; these read AGLSFGNEAS and HR. Glu-174 is a catalytic residue. A substrate-binding site is contributed by Arg-212. His-248 is an active-site residue. Substrate is bound by residues Asp-250 and Asn-359. Cys-365 acts as the Nucleophile in catalysis.

The protein belongs to the succinylarginine dihydrolase family. In terms of assembly, homodimer.

It carries out the reaction N(2)-succinyl-L-arginine + 2 H2O + 2 H(+) = N(2)-succinyl-L-ornithine + 2 NH4(+) + CO2. It participates in amino-acid degradation; L-arginine degradation via AST pathway; L-glutamate and succinate from L-arginine: step 2/5. Functionally, catalyzes the hydrolysis of N(2)-succinylarginine into N(2)-succinylornithine, ammonia and CO(2). In Salmonella dublin (strain CT_02021853), this protein is N-succinylarginine dihydrolase.